We begin with the raw amino-acid sequence, 466 residues long: Glutamate--tRNA ligase 1 (466 aa).

The short motif at 10 to 20 is the 'HIGH' region element; it reads PSPTGLIHLGN. Zn(2+)-binding residues include cysteine 103, cysteine 105, cysteine 130, and histidine 132. A 'KMSKS' region motif is present at residues 247–251; that stretch reads PLSKR. Lysine 250 contributes to the ATP binding site.

This sequence belongs to the class-I aminoacyl-tRNA synthetase family. Glutamate--tRNA ligase type 1 subfamily. As to quaternary structure, monomer. The cofactor is Zn(2+).

Its subcellular location is the cytoplasm. It catalyses the reaction tRNA(Glu) + L-glutamate + ATP = L-glutamyl-tRNA(Glu) + AMP + diphosphate. Catalyzes the attachment of glutamate to tRNA(Glu) in a two-step reaction: glutamate is first activated by ATP to form Glu-AMP and then transferred to the acceptor end of tRNA(Glu). This is Glutamate--tRNA ligase 1 from Methylococcus capsulatus (strain ATCC 33009 / NCIMB 11132 / Bath).